The chain runs to 156 residues: Protein FAM162A (156 aa).

Residues 37–57 are disordered; it reads TNGFCSKPQESPKPPDQHTYS. The required for proapoptotic activity stretch occupies residues 78-104; it reads RFKKEDEIPETVSFEMLDAAKNKVRVK. A helical transmembrane segment spans residues 105-122; sequence ISYVMIALTVAGCVLMVI.

The protein belongs to the UPF0389 family. Interacts with HSP90AB1; HSP90AB1 is essential for FAM162A mitochondrial localization and pro-apoptotic activity. Interacts with VDAC2; the interaction is probably involved in inducing mitochondrial permeability transition.

It is found in the mitochondrion membrane. Proposed to be involved in regulation of apoptosis; the exact mechanism may differ between cell types/tissues. May be involved in hypoxia-induced cell death of transformed cells implicating cytochrome C release and caspase activation (such as CASP9) and inducing mitochondrial permeability transition. May be involved in hypoxia-induced cell death of neuronal cells probably by promoting release of AIFM1 from mitochondria to cytoplasm and its translocation to the nucleus; however, the involvement of caspases has been reported conflictingly. This Bos taurus (Bovine) protein is Protein FAM162A (FAM162A).